Reading from the N-terminus, the 153-residue chain is MFQIGDNIVYPMHGAGIIEAIEEKEFLEEKQQYYVIRMSISNMTVMIPTSKILSSNIRPVTDILALKHIMHIFQHGESDRLLPWKQRYKINTDKIKTGEIQEGAEVVRDLMRMKKEKALNASEKKMLDNAYEFLISELEVIKGITEKQIKSFG.

This sequence belongs to the CarD family.

The protein is Putative transcription factor YdeB (ydeB) of Bacillus subtilis (strain 168).